Consider the following 224-residue polypeptide: Lipoprotein-releasing system ATP-binding protein LolD (224 aa).

The ABC transporter domain occupies 5 to 224; it reads LVLDGLTKAY…VVRLEAGRVV (220 aa). 42–49 lines the ATP pocket; that stretch reads APSGAGKS.

Belongs to the ABC transporter superfamily. Lipoprotein translocase (TC 3.A.1.125) family. In terms of assembly, the complex is composed of two ATP-binding proteins (LolD) and two transmembrane proteins (LolC and LolE).

Its subcellular location is the cell inner membrane. Functionally, part of the ABC transporter complex LolCDE involved in the translocation of mature outer membrane-directed lipoproteins, from the inner membrane to the periplasmic chaperone, LolA. Responsible for the formation of the LolA-lipoprotein complex in an ATP-dependent manner. The sequence is that of Lipoprotein-releasing system ATP-binding protein LolD from Cereibacter sphaeroides (strain ATCC 17023 / DSM 158 / JCM 6121 / CCUG 31486 / LMG 2827 / NBRC 12203 / NCIMB 8253 / ATH 2.4.1.) (Rhodobacter sphaeroides).